The primary structure comprises 373 residues: Probable protein phosphatase 2C 73 (373 aa).

In terms of domain architecture, PPM-type phosphatase spans 61-354 (LASLFSKRGE…DDMSVVCLFL (294 aa)). Asp97, Gly98, Asp299, and Asp345 together coordinate Mn(2+).

The protein belongs to the PP2C family. Requires Mg(2+) as cofactor. It depends on Mn(2+) as a cofactor.

It carries out the reaction O-phospho-L-seryl-[protein] + H2O = L-seryl-[protein] + phosphate. The catalysed reaction is O-phospho-L-threonyl-[protein] + H2O = L-threonyl-[protein] + phosphate. This is Probable protein phosphatase 2C 73 (PPC6-7) from Arabidopsis thaliana (Mouse-ear cress).